Reading from the N-terminus, the 127-residue chain is Large-conductance mechanosensitive channel (127 aa).

Transmembrane regions (helical) follow at residues 19-39, 42-62, and 67-87; these read VGVI…TNII, LLGI…VGSA, and GAFI…FLLI.

This sequence belongs to the MscL family. In terms of assembly, homopentamer.

The protein localises to the cell membrane. Its function is as follows. Channel that opens in response to stretch forces in the membrane lipid bilayer. May participate in the regulation of osmotic pressure changes within the cell. This chain is Large-conductance mechanosensitive channel, found in Levilactobacillus brevis (strain ATCC 367 / BCRC 12310 / CIP 105137 / JCM 1170 / LMG 11437 / NCIMB 947 / NCTC 947) (Lactobacillus brevis).